The chain runs to 51 residues: UPF0181 protein VVA0806 (51 aa).

It belongs to the UPF0181 family.

The polypeptide is UPF0181 protein VVA0806 (Vibrio vulnificus (strain YJ016)).